We begin with the raw amino-acid sequence, 371 residues long: Dual-specificity RNA methyltransferase RlmN (371 aa).

Residue E114 is the Proton acceptor of the active site. Positions 120–352 (EEDHFTLCVS…VMTRQSKGAD (233 aa)) constitute a Radical SAM core domain. C127 and C357 form a disulfide bridge. [4Fe-4S] cluster-binding residues include C134, C138, and C141. Residues 183–184 (GE), S216, 238–240 (SLN), and N314 each bind S-adenosyl-L-methionine. C357 serves as the catalytic S-methylcysteine intermediate.

The protein belongs to the radical SAM superfamily. RlmN family. [4Fe-4S] cluster serves as cofactor.

It is found in the cytoplasm. The enzyme catalyses adenosine(2503) in 23S rRNA + 2 reduced [2Fe-2S]-[ferredoxin] + 2 S-adenosyl-L-methionine = 2-methyladenosine(2503) in 23S rRNA + 5'-deoxyadenosine + L-methionine + 2 oxidized [2Fe-2S]-[ferredoxin] + S-adenosyl-L-homocysteine. It catalyses the reaction adenosine(37) in tRNA + 2 reduced [2Fe-2S]-[ferredoxin] + 2 S-adenosyl-L-methionine = 2-methyladenosine(37) in tRNA + 5'-deoxyadenosine + L-methionine + 2 oxidized [2Fe-2S]-[ferredoxin] + S-adenosyl-L-homocysteine. Functionally, specifically methylates position 2 of adenine 2503 in 23S rRNA and position 2 of adenine 37 in tRNAs. m2A2503 modification seems to play a crucial role in the proofreading step occurring at the peptidyl transferase center and thus would serve to optimize ribosomal fidelity. This is Dual-specificity RNA methyltransferase RlmN from Desulfosudis oleivorans (strain DSM 6200 / JCM 39069 / Hxd3) (Desulfococcus oleovorans).